We begin with the raw amino-acid sequence, 504 residues long: Peptidyl-prolyl cis-trans isomerase-like 4 (504 aa).

Residues 1 to 169 (MSVMLETSLG…QNIRIRHVEI (169 aa)) form the PPIase cyclophilin-type domain. In terms of domain architecture, RRM spans 246–324 (NILFVCKLNP…RRIWVDFSQS (79 aa)). A compositionally biased stretch (polar residues) spans 330-339 (RSMLSSSNPT). Residues 330–504 (RSMLSSSNPT…RERDDRDRRR (175 aa)) form a disordered region. Positions 340-354 (GRGGRGGRGGRGGNY) are enriched in gly residues. Composition is skewed to basic and acidic residues over residues 356-381 (GRRD…DSRR) and 416-504 (SKRD…DRRR).

This sequence belongs to the cyclophilin-type PPIase family. PPIL4 subfamily.

Its subcellular location is the nucleus. The enzyme catalyses [protein]-peptidylproline (omega=180) = [protein]-peptidylproline (omega=0). In terms of biological role, PPIases accelerate the folding of proteins. It catalyzes the cis-trans isomerization of proline imidic peptide bonds in oligopeptides. This chain is Peptidyl-prolyl cis-trans isomerase-like 4 (CYP6), found in Cryptococcus neoformans var. neoformans serotype D (strain B-3501A) (Filobasidiella neoformans).